Here is a 445-residue protein sequence, read N- to C-terminus: Retrovirus-related Pol polyprotein from type-1 retrotransposable element R2 (445 aa).

The Reverse transcriptase domain maps to 1–114; the sequence is QPSVFNLVKW…LSRDDSLAKA (114 aa). The tract at residues 115–445 is nucleic acid-binding endonuclease; sequence MLASAGPAAE…GATPRQLIEY (331 aa). The segment covering 380–389 has biased composition (basic residues); that stretch reads GPRPAHHHQP. The disordered stretch occupies residues 380–445; the sequence is GPRPAHHHQP…GATPRQLIEY (66 aa). The span at 396-405 shows a compositional bias: polar residues; it reads ATANTGTLQS.

It catalyses the reaction DNA(n) + a 2'-deoxyribonucleoside 5'-triphosphate = DNA(n+1) + diphosphate. This Popillia japonica (Japanese beetle) protein is Retrovirus-related Pol polyprotein from type-1 retrotransposable element R2.